Consider the following 555-residue polypeptide: Oxygen-dependent choline dehydrogenase (555 aa).

Residue 4–33 coordinates FAD; the sequence is DYIIIGAGSAGNVLATRLTEDADVSVLLLE. The disordered stretch occupies residues 180-202; it reads QQEGFGPMDRTVTPKGRRASTAR. Histidine 473 serves as the catalytic Proton acceptor.

This sequence belongs to the GMC oxidoreductase family. Requires FAD as cofactor.

The enzyme catalyses choline + A = betaine aldehyde + AH2. It carries out the reaction betaine aldehyde + NAD(+) + H2O = glycine betaine + NADH + 2 H(+). It participates in amine and polyamine biosynthesis; betaine biosynthesis via choline pathway; betaine aldehyde from choline (cytochrome c reductase route): step 1/1. Its function is as follows. Involved in the biosynthesis of the osmoprotectant glycine betaine. Catalyzes the oxidation of choline to betaine aldehyde and betaine aldehyde to glycine betaine at the same rate. The sequence is that of Oxygen-dependent choline dehydrogenase from Serratia proteamaculans (strain 568).